The following is a 134-amino-acid chain: Transcription antitermination protein NusB (134 aa).

It belongs to the NusB family.

Involved in transcription antitermination. Required for transcription of ribosomal RNA (rRNA) genes. Binds specifically to the boxA antiterminator sequence of the ribosomal RNA (rrn) operons. In Syntrophomonas wolfei subsp. wolfei (strain DSM 2245B / Goettingen), this protein is Transcription antitermination protein NusB.